The chain runs to 438 residues: Carboxypeptidase A6 (438 aa).

Positions 1-30 (MNFLGNPRSHTAAFLPVCWLLLNILKPGHC) are cleaved as a signal peptide. The propeptide at 31 to 129 (HSYDNRYAGD…NSLQTQRNRR (99 aa)) is activation peptide. 2 N-linked (GlcNAc...) asparagine glycosylation sites follow: N89 and N153. A Peptidase M14 domain is found at 138–433 (VYHSLEDIQS…LAVKNITMHL (296 aa)). Zn(2+) is bound by residues H197 and E200. Substrate-binding positions include 197-200 (HARE), R255, and 272-273 (NR). C266 and C289 are oxidised to a cystine. A Zn(2+)-binding site is contributed by H325. 326-327 (AY) is a substrate binding site. An N-linked (GlcNAc...) asparagine glycan is attached at N344. Y377 lines the substrate pocket. The active-site Proton donor/acceptor is E399. N428 carries N-linked (GlcNAc...) asparagine glycosylation.

This sequence belongs to the peptidase M14 family. Requires Zn(2+) as cofactor. In brain, highly expressed in the olfactory bulb with lower levels in other regions including cerebral cortex, hippocampus, hypothalamus, striatum and medulla. Within the olfactory bulb, highest levels occur in the mitral and granular layers with lower levels in the internal and external plexiform layers. Moderate levels are found in the epididymis with low levels in colon and spleen. Not detected in adrenal, liver, lung, ovary or testis. At embryonic day 14.5, enriched in eye, ear, osteoblasts, stomach, skin, dorsal root ganglia and throughout the CNS.

Its subcellular location is the secreted. It is found in the extracellular space. It localises to the extracellular matrix. May be involved in the proteolytic inactivation of enkephalins and neurotensin in some brain areas. May convert inactive angiotensin I into the biologically active angiotensin II. Releases a C-terminal amino acid, with preference for large hydrophobic C-terminal amino acids and shows only very weak activity toward small amino acids and histidine. In Mus musculus (Mouse), this protein is Carboxypeptidase A6 (Cpa6).